Here is a 62-residue protein sequence, read N- to C-terminus: Photosystem II reaction center protein Z (62 aa).

The next 2 helical transmembrane spans lie at 8-28 (AVFALIATSSILLISVPVVFA) and 41-61 (FSGTSLWIGLVFLVAILNSLI).

Belongs to the PsbZ family. As to quaternary structure, PSII is composed of 1 copy each of membrane proteins PsbA, PsbB, PsbC, PsbD, PsbE, PsbF, PsbH, PsbI, PsbJ, PsbK, PsbL, PsbM, PsbT, PsbY, PsbZ, Psb30/Ycf12, at least 3 peripheral proteins of the oxygen-evolving complex and a large number of cofactors. It forms dimeric complexes.

The protein localises to the plastid. The protein resides in the chloroplast thylakoid membrane. Its function is as follows. May control the interaction of photosystem II (PSII) cores with the light-harvesting antenna, regulates electron flow through the 2 photosystem reaction centers. PSII is a light-driven water plastoquinone oxidoreductase, using light energy to abstract electrons from H(2)O, generating a proton gradient subsequently used for ATP formation. The polypeptide is Photosystem II reaction center protein Z (Amborella trichopoda).